Reading from the N-terminus, the 356-residue chain is MKKKVLVGMSGGVDSSVAAYLLKEQGYEVIGVTMQIWQDDEEFIEKEGGCCSLSAVADARRVANKIGIPFYVMNFKDAFKRNVIDYFVDEYMEGRTPNPCITCNKFIKFSSFLDKAMAMGIDYVATGHYAIIEKHNDRYIIKKSEDDKKDQTYALYNLTQFQLERTLMPCGQYKKSKIREIAKEIGLRVHNKKDSEEICFIPDNDHGRYIKNRFPNKVREGNFVDKQGNVLGRHKGIVYYTIGQRKGLGIAFGKPMYVVDINPFRNEVVLGDLEDLLNTELIAKDINYIPFDTLKEPMEVEAKIRYSQTPSKAIITPIEDGRVRVNFQEKQRAITKGQSVVFYKDDLLIGGGIIEK.

ATP-binding positions include 8-15 (GMSGGVDS) and Met34. Cys103 serves as the catalytic Nucleophile. An intrachain disulfide couples Cys103 to Cys199. Gly127 lines the ATP pocket. Residues 149 to 151 (KDQ) form an interaction with tRNA region. Catalysis depends on Cys199, which acts as the Cysteine persulfide intermediate. An interaction with tRNA region spans residues 305–306 (RY).

Belongs to the MnmA/TRMU family.

The protein resides in the cytoplasm. The catalysed reaction is S-sulfanyl-L-cysteinyl-[protein] + uridine(34) in tRNA + AH2 + ATP = 2-thiouridine(34) in tRNA + L-cysteinyl-[protein] + A + AMP + diphosphate + H(+). Functionally, catalyzes the 2-thiolation of uridine at the wobble position (U34) of tRNA, leading to the formation of s(2)U34. The sequence is that of tRNA-specific 2-thiouridylase MnmA 1 from Clostridium botulinum (strain Loch Maree / Type A3).